The chain runs to 502 residues: Histidine--tRNA ligase (502 aa).

This sequence belongs to the class-II aminoacyl-tRNA synthetase family. Homodimer.

It localises to the cytoplasm. It catalyses the reaction tRNA(His) + L-histidine + ATP = L-histidyl-tRNA(His) + AMP + diphosphate + H(+). The polypeptide is Histidine--tRNA ligase (Brucella suis (strain ATCC 23445 / NCTC 10510)).